The sequence spans 91 residues: Small ribosomal subunit protein uS19 (91 aa).

It belongs to the universal ribosomal protein uS19 family.

In terms of biological role, protein S19 forms a complex with S13 that binds strongly to the 16S ribosomal RNA. The polypeptide is Small ribosomal subunit protein uS19 (Synechococcus sp. (strain CC9311)).